Reading from the N-terminus, the 26-residue chain is Conotoxin Eb6.18 (26 aa).

Disulfide bonds link cysteine 7-cysteine 18 and cysteine 13-cysteine 25.

Belongs to the conotoxin O1 superfamily. Expressed by the venom duct.

Its subcellular location is the secreted. The sequence is that of Conotoxin Eb6.18 (E1) from Conus ebraeus (Hebrew cone).